We begin with the raw amino-acid sequence, 1538 residues long: CLIP-associating protein 1 (1538 aa).

2 HEAT repeats span residues 87–124 (AQIGTVLPSLIDRLGDAKDSVREQDQTLLLKIMDQAAN) and 163–200 (LTLSKIVPHICNLLGDPNSQVRDAAINSLVEIYRHVGE). The disordered stretch occupies residues 235–292 (SANDKNFDDEDSVDGNRPSSASSTSSKAPPSSRRNVGMGTTRRLGSSTLGSKSSAAKE). The residue at position 246 (serine 246) is a Phosphoserine. Residues 251 to 268 (RPSSASSTSSKAPPSSRR) show a composition bias toward low complexity. HEAT repeat units lie at residues 405 to 440 (HGAEAIMPTIFNLIPNSAKIMATSGVVAVRLIIRHT) and 441 to 477 (HIPRLIPVITSNCTSKSVAVRRRCFEFLDLLLQEWQT). The interval 543–783 (SDSIVSLPQS…DRFGLGQPGR (241 aa)) is disordered. A phosphoserine mark is found at serine 545, serine 548, serine 558, serine 559, and serine 568. The span at 548–567 (SLPQSDRSSSSSQESLNRPL) shows a compositional bias: low complexity. Residues 574–594 (TGSTTSRASTVSTKSVSTTGS) show a composition bias toward low complexity. A Phosphoserine modification is found at serine 600. The segment covering 606 to 628 (AAASAKSKVSSSSGTTPFSSAAA) has biased composition (low complexity). A phosphoserine mark is found at serine 636, serine 646, serine 647, and serine 649. A compositionally biased stretch (polar residues) spans 645–658 (QSSGSATNVASTPD). Threonine 656 carries the phosphothreonine modification. The interval 662 to 785 (RSRAKVVSQS…FGLGQPGRIP (124 aa)) is interaction with microtubules, MAPRE1 and MAPRE3. Positions 673–692 (RSRSANPAGAGSRSSSPGKL) are enriched in low complexity. Serine 684, serine 688, serine 695, and serine 705 each carry phosphoserine. Positions 693–705 (LGSGYGGLTGGSS) are enriched in gly residues. Position 711 is a phosphothreonine (threonine 711). Serine 714 is modified (phosphoserine). Over residues 724 to 733 (QGCSRETSPN) the composition is skewed to polar residues. Phosphoserine is present on residues serine 787, serine 797, and serine 823. Residues 974 to 1011 (QQFNILMRFIVDQTQTPNLKVKVAILKYIESLARQMDP) form an HEAT 5 repeat. Disordered stretches follow at residues 1080 to 1120 (HLKN…CSHG) and 1136 to 1156 (AKHPPPFSQPNSIPTAPSHKA). The segment covering 1082 to 1097 (KNSSNTSVGSPSNTIG) has biased composition (polar residues). Phosphoserine is present on serine 1091. A phosphothreonine mark is found at threonine 1095 and threonine 1099. A compositionally biased stretch (low complexity) spans 1106–1115 (SRTSPLTSPT). Serine 1113 is subject to Phosphoserine. Phosphoserine is present on residues serine 1196 and serine 1223. Positions 1215–1238 (VSRDGGAASPATEGRGGSEVEGGR) are disordered. An interaction with CLIP2 region spans residues 1254–1538 (RAFPGPRARD…SSSSDVSTHS (285 aa)). Residues 1254–1538 (RAFPGPRARD…SSSSDVSTHS (285 aa)) form an interaction with PHLDB2 and RSN region. Positions 1256-1538 (FPGPRARDYN…SSSSDVSTHS (283 aa)) are localization to kinetochores. The stretch at 1299–1330 (DHSDLVADLLKELSNHNERVEERKGALLELLK) forms a coiled coil. 2 HEAT repeats span residues 1342–1379 (EHFKTILLLLLETLGDKDHSIRALALRVLREILRNQPA) and 1460–1497 (QLLVDIIPGLLQGYDNTESSVRKASVFCLVAIYSVIGE).

The protein belongs to the CLASP family. Interacts with CLIP2, ERC1, MAPRE1, MAPRE3, microtubules, PHLDB2 and RSN. The interaction with ERC1 may be mediated by PHLDB2. Interacts with GCC2; recruits CLASP1 to Golgi membranes. Interacts with MACF1. Interacts with mtcl2 and MTCL1.

It is found in the cytoplasm. It localises to the cytoskeleton. Its subcellular location is the microtubule organizing center. The protein resides in the centrosome. The protein localises to the chromosome. It is found in the centromere. It localises to the kinetochore. Its subcellular location is the spindle. The protein resides in the golgi apparatus. The protein localises to the trans-Golgi network. Microtubule plus-end tracking protein that promotes the stabilization of dynamic microtubules. Involved in the nucleation of noncentrosomal microtubules originating from the trans-Golgi network (TGN). Required for the polarization of the cytoplasmic microtubule arrays in migrating cells towards the leading edge of the cell. May act at the cell cortex to enhance the frequency of rescue of depolymerizing microtubules by attaching their plus-ends to cortical platforms composed of ERC1 and PHLDB2. This cortical microtubule stabilizing activity is regulated at least in part by phosphatidylinositol 3-kinase signaling. Also performs a similar stabilizing function at the kinetochore which is essential for the bipolar alignment of chromosomes on the mitotic spindle. The polypeptide is CLIP-associating protein 1 (CLASP1) (Homo sapiens (Human)).